The following is a 212-amino-acid chain: Thymidine kinase (212 aa).

Residues 16-23 (GPMFSGKS) and 99-102 (DEAQ) contribute to the ATP site. Catalysis depends on glutamate 100, which acts as the Proton acceptor.

This sequence belongs to the thymidine kinase family. In terms of assembly, homotetramer.

It localises to the cytoplasm. It catalyses the reaction thymidine + ATP = dTMP + ADP + H(+). The sequence is that of Thymidine kinase from Deinococcus radiodurans (strain ATCC 13939 / DSM 20539 / JCM 16871 / CCUG 27074 / LMG 4051 / NBRC 15346 / NCIMB 9279 / VKM B-1422 / R1).